The sequence spans 443 residues: Aspartic protease PEP3 (443 aa).

The signal sequence occupies residues 1-36 (MQNRPRVFDSAMNLSPNMHFLSLMPGLLLLSLQVHT). A propeptide spans 37–107 (SPTPLKKTIR…NTVSKAMQAN (71 aa)) (activation peptide). The region spanning 123 to 440 (YLSPVTIGGQ…DLRGPSLHVA (318 aa)) is the Peptidase A1 domain. Residue aspartate 139 is part of the active site. Asparagine 180 and asparagine 293 each carry an N-linked (GlcNAc...) asparagine glycan. Aspartate 327 is an active-site residue. The cysteines at positions 363 and 403 are disulfide-linked. 2 N-linked (GlcNAc...) asparagine glycosylation sites follow: asparagine 364 and asparagine 388.

Belongs to the peptidase A1 family. Monomer.

The protein resides in the secreted. Its function is as follows. Secreted aspartic endopeptidase that allows assimilation of proteinaceous substrates. The scissile peptide bond is attacked by a nucleophilic water molecule activated by two aspartic residues in the active site. Shows a broad primary substrate specificity. Favors hydrophobic residues at the P1 and P1' positions. This chain is Aspartic protease PEP3, found in Coccidioides posadasii (strain C735) (Valley fever fungus).